Consider the following 249-residue polypeptide: Triosephosphate isomerase (249 aa).

8–10 (NWK) contacts substrate. The active-site Electrophile is His95. The Proton acceptor role is filled by Glu163. Residues Gly169 and Ser209 each coordinate substrate.

It belongs to the triosephosphate isomerase family. In terms of assembly, homodimer.

The protein resides in the cytoplasm. The enzyme catalyses D-glyceraldehyde 3-phosphate = dihydroxyacetone phosphate. The protein operates within carbohydrate biosynthesis; gluconeogenesis. It functions in the pathway carbohydrate degradation; glycolysis; D-glyceraldehyde 3-phosphate from glycerone phosphate: step 1/1. In terms of biological role, involved in the gluconeogenesis. Catalyzes stereospecifically the conversion of dihydroxyacetone phosphate (DHAP) to D-glyceraldehyde-3-phosphate (G3P). The polypeptide is Triosephosphate isomerase (Orientia tsutsugamushi (strain Boryong) (Rickettsia tsutsugamushi)).